The sequence spans 230 residues: Probable septum site-determining protein MinC (230 aa).

Belongs to the MinC family. As to quaternary structure, interacts with MinD and FtsZ.

Its function is as follows. Cell division inhibitor that blocks the formation of polar Z ring septums. Rapidly oscillates between the poles of the cell to destabilize FtsZ filaments that have formed before they mature into polar Z rings. Prevents FtsZ polymerization. In Cronobacter sakazakii (strain ATCC BAA-894) (Enterobacter sakazakii), this protein is Probable septum site-determining protein MinC.